A 58-amino-acid polypeptide reads, in one-letter code: uncharacterized protein (58 aa).

Helical transmembrane passes span Ile5–Glu25 and Trp32–Ile52.

Its subcellular location is the cell membrane. This is an uncharacterized protein from Methanocaldococcus jannaschii (strain ATCC 43067 / DSM 2661 / JAL-1 / JCM 10045 / NBRC 100440) (Methanococcus jannaschii).